A 495-amino-acid chain; its full sequence is Ribosomal protein uS12 methylthiotransferase RimO (495 aa).

The 117-residue stretch at 5-121 (RTVALVTLGC…ISDRLQTILN (117 aa)) folds into the MTTase N-terminal domain. [4Fe-4S] cluster contacts are provided by Cys-14, Cys-50, and Cys-84. A disordered region spans residues 145–183 (QSAGADVALPGHGAPEGLPEDLPEGLAPESGPRAPLRRR). The 232-residue stretch at 184 to 415 (LDGSPVASVK…RLAEELVAQR (232 aa)) folds into the Radical SAM core domain. [4Fe-4S] cluster is bound by residues Cys-198, Cys-202, and Cys-205. In terms of domain architecture, TRAM spans 417 to 484 (EERVGETVHV…GVDLVAEPLP (68 aa)).

This sequence belongs to the methylthiotransferase family. RimO subfamily. The cofactor is [4Fe-4S] cluster.

The protein localises to the cytoplasm. It catalyses the reaction L-aspartate(89)-[ribosomal protein uS12]-hydrogen + (sulfur carrier)-SH + AH2 + 2 S-adenosyl-L-methionine = 3-methylsulfanyl-L-aspartate(89)-[ribosomal protein uS12]-hydrogen + (sulfur carrier)-H + 5'-deoxyadenosine + L-methionine + A + S-adenosyl-L-homocysteine + 2 H(+). Catalyzes the methylthiolation of an aspartic acid residue of ribosomal protein uS12. This chain is Ribosomal protein uS12 methylthiotransferase RimO, found in Streptomyces avermitilis (strain ATCC 31267 / DSM 46492 / JCM 5070 / NBRC 14893 / NCIMB 12804 / NRRL 8165 / MA-4680).